A 229-amino-acid chain; its full sequence is Large ribosomal subunit protein uL1 (229 aa).

It belongs to the universal ribosomal protein uL1 family. In terms of assembly, part of the 50S ribosomal subunit.

Binds directly to 23S rRNA. The L1 stalk is quite mobile in the ribosome, and is involved in E site tRNA release. In terms of biological role, protein L1 is also a translational repressor protein, it controls the translation of the L11 operon by binding to its mRNA. This chain is Large ribosomal subunit protein uL1, found in Lactococcus lactis subsp. lactis (strain IL1403) (Streptococcus lactis).